The following is a 184-amino-acid chain: ATP synthase subunit b, chloroplastic (184 aa).

Residues 27–49 (LATNPINLSVVLGVLIFFGKGVL) form a helical membrane-spanning segment.

Belongs to the ATPase B chain family. As to quaternary structure, F-type ATPases have 2 components, F(1) - the catalytic core - and F(0) - the membrane proton channel. F(1) has five subunits: alpha(3), beta(3), gamma(1), delta(1), epsilon(1). F(0) has four main subunits: a(1), b(1), b'(1) and c(10-14). The alpha and beta chains form an alternating ring which encloses part of the gamma chain. F(1) is attached to F(0) by a central stalk formed by the gamma and epsilon chains, while a peripheral stalk is formed by the delta, b and b' chains.

The protein resides in the plastid. It localises to the chloroplast thylakoid membrane. F(1)F(0) ATP synthase produces ATP from ADP in the presence of a proton or sodium gradient. F-type ATPases consist of two structural domains, F(1) containing the extramembraneous catalytic core and F(0) containing the membrane proton channel, linked together by a central stalk and a peripheral stalk. During catalysis, ATP synthesis in the catalytic domain of F(1) is coupled via a rotary mechanism of the central stalk subunits to proton translocation. Functionally, component of the F(0) channel, it forms part of the peripheral stalk, linking F(1) to F(0). The chain is ATP synthase subunit b, chloroplastic from Chloranthus spicatus (Chulantree).